The sequence spans 278 residues: Neuronal membrane glycoprotein M6-a (278 aa).

The residue at position 1 (M1) is an N-acetylmethionine. Residues 1-22 (MEENMEEGQTQKGCFECCIKCL) are Cytoplasmic-facing. The helical transmembrane segment at 23 to 43 (GGIPYASLIATILLYAGVALF) threads the bilayer. Residues 44 to 84 (CGCGHEALSGTVNILQTYFELARTAGDTLDVFTMIDIFKYV) lie on the Extracellular side of the membrane. The helical transmembrane segment at 85–105 (IYGIAAAFFVYGILLMVEGFF) threads the bilayer. At 106–127 (TTGAIKDLYGDFKITTCGRCVS) the chain is on the cytoplasmic side. The chain crosses the membrane as a helical span at residues 128–148 (AWFIMLTYLFMLAWLGVTAFT). At 149–213 (SLPVYMYFNV…STELNMTFHL (65 aa)) the chain is on the extracellular side. N164 carries N-linked (GlcNAc...) asparagine glycosylation. An intrachain disulfide couples C174 to C192. N-linked (GlcNAc...) asparagine glycosylation is present at N208. A helical membrane pass occupies residues 214–234 (FIVALAGAGAAVIAMVHYLMV). The Cytoplasmic portion of the chain corresponds to 235–278 (LSANWAYVKDACRMQKYEDIKSKEEQELHDIHSTRSKERLNAYT). Position 256 is a phosphoserine (S256). T278 carries the phosphothreonine modification.

The protein belongs to the myelin proteolipid protein family. As to quaternary structure, interacts with OPRM1. Interacts with palmitoyltransferase ZDHHC17/HIP14; the interaction leads to palmitoylation of GPM6A. Post-translationally, N-glycosylated. In terms of processing, palmitoylated by ZDHHC17/HIP14. Widely expressed in the CNS. Found especially in the granule cell layer of the cerebellum but not in the molecular layer or white matter. Expressed in the immature embryonic retina including the nerve fiber layer (NFL), inner plexiform layer (IPL), and outer plexiform layer (OPL). Weakly expressed in processes of Mueller glia cells.

The protein localises to the cell membrane. It localises to the cell projection. It is found in the axon. The protein resides in the growth cone. Its subcellular location is the dendritic spine. The protein localises to the filopodium. It localises to the neuron projection. In terms of biological role, involved in neuronal differentiation, including differentiation and migration of neuronal stem cells. Plays a role in neuronal plasticity and is involved in neurite and filopodia outgrowth, filopodia motility and probably synapse formation. Gpm6a-induced filopodia formation involves mitogen-activated protein kinase (MAPK) and Src signaling pathways. Conflictingly, PubMed:22162747 reports that induced cellular protrusions are simple membrane-wrapped tubules without actin or tubulin-based cytoskeletons and with Gpm6a gliding along membrane edges indicative for a function in actin-independent membrane deformation. May be involved in neuronal NGF-dependent Ca(2+) influx. May be involved in regulation of endocytosis and intracellular trafficking of G-protein-coupled receptors (GPCRs); enhances internalization and recycling of mu-type opioid receptor. This chain is Neuronal membrane glycoprotein M6-a (Gpm6a), found in Mus musculus (Mouse).